Reading from the N-terminus, the 418-residue chain is Glucose-1-phosphate adenylyltransferase (418 aa).

Residues Tyr107, Gly172, 187-188 (EK), and Ser205 each bind alpha-D-glucose 1-phosphate.

Belongs to the bacterial/plant glucose-1-phosphate adenylyltransferase family. As to quaternary structure, homotetramer.

The catalysed reaction is alpha-D-glucose 1-phosphate + ATP + H(+) = ADP-alpha-D-glucose + diphosphate. Its pathway is glycan biosynthesis; glycogen biosynthesis. Involved in the biosynthesis of ADP-glucose, a building block required for the elongation reactions to produce glycogen. Catalyzes the reaction between ATP and alpha-D-glucose 1-phosphate (G1P) to produce pyrophosphate and ADP-Glc. The sequence is that of Glucose-1-phosphate adenylyltransferase from Gemmatimonas aurantiaca (strain DSM 14586 / JCM 11422 / NBRC 100505 / T-27).